The primary structure comprises 417 residues: Serine hydroxymethyltransferase (417 aa).

Residues Leu121 and 125 to 127 (GHL) contribute to the (6S)-5,6,7,8-tetrahydrofolate site. Position 229 is an N6-(pyridoxal phosphate)lysine (Lys229). 355-357 (SSF) provides a ligand contact to (6S)-5,6,7,8-tetrahydrofolate.

The protein belongs to the SHMT family. Homodimer. Pyridoxal 5'-phosphate is required as a cofactor.

The protein resides in the cytoplasm. The enzyme catalyses (6R)-5,10-methylene-5,6,7,8-tetrahydrofolate + glycine + H2O = (6S)-5,6,7,8-tetrahydrofolate + L-serine. It participates in one-carbon metabolism; tetrahydrofolate interconversion. It functions in the pathway amino-acid biosynthesis; glycine biosynthesis; glycine from L-serine: step 1/1. Its function is as follows. Catalyzes the reversible interconversion of serine and glycine with tetrahydrofolate (THF) serving as the one-carbon carrier. This reaction serves as the major source of one-carbon groups required for the biosynthesis of purines, thymidylate, methionine, and other important biomolecules. Also exhibits THF-independent aldolase activity toward beta-hydroxyamino acids, producing glycine and aldehydes, via a retro-aldol mechanism. This is Serine hydroxymethyltransferase from Baumannia cicadellinicola subsp. Homalodisca coagulata.